The primary structure comprises 447 residues: Phosphoglucosamine mutase (447 aa).

The active-site Phosphoserine intermediate is S101. Mg(2+) contacts are provided by S101, D242, D244, and D246. Residue S101 is modified to Phosphoserine.

Belongs to the phosphohexose mutase family. It depends on Mg(2+) as a cofactor. Activated by phosphorylation.

The catalysed reaction is alpha-D-glucosamine 1-phosphate = D-glucosamine 6-phosphate. Catalyzes the conversion of glucosamine-6-phosphate to glucosamine-1-phosphate. This is Phosphoglucosamine mutase from Azorhizobium caulinodans (strain ATCC 43989 / DSM 5975 / JCM 20966 / LMG 6465 / NBRC 14845 / NCIMB 13405 / ORS 571).